The chain runs to 344 residues: Protease HtpX homolog (344 aa).

The next 3 membrane-spanning stretches (helical) occupy residues 8-28, 46-66, and 74-94; these read VALG…ATVA, ALTG…FVLV, and VSFL…TYVA. His172 serves as a coordination point for Zn(2+). The active site involves Glu173. His176 serves as a coordination point for Zn(2+). The next 2 membrane-spanning stretches (helical) occupy residues 183-203 and 220-240; these read AIML…VTAV and LAVG…VLAF. Glu245 is a binding site for Zn(2+).

It belongs to the peptidase M48B family. Zn(2+) is required as a cofactor.

Its subcellular location is the cell membrane. The polypeptide is Protease HtpX homolog (Pyrobaculum calidifontis (strain DSM 21063 / JCM 11548 / VA1)).